Consider the following 534-residue polypeptide: Low affinity inorganic phosphate transporter 1 (534 aa).

At 1–23 the chain is on the cytoplasmic side; the sequence is MAKDLQVLTALDVAKTQLYHFTA. The chain crosses the membrane as a helical span at residues 24–44; the sequence is IVIAGMGFFTDAYDLFCISLV. The Extracellular portion of the chain corresponds to 45-69; the sequence is TKLLGRIYYHHEGALKPGSLPPNVA. A helical membrane pass occupies residues 70-90; that stretch reads AAVNGVAFCGTLAGQLFFGWL. Topologically, residues 91–98 are cytoplasmic; sequence GDKLGRKK. Residues 99–119 form a helical membrane-spanning segment; sequence VYGMTLMLMVICSIASGLSFG. The Extracellular portion of the chain corresponds to 120-124; that stretch reads HTPKS. Residues 125–145 traverse the membrane as a helical segment; sequence VMATLCFFRFWLGFGIGGDYP. The Cytoplasmic portion of the chain corresponds to 146–163; that stretch reads LSATIMSEYANKKTRGAF. The chain crosses the membrane as a helical span at residues 164-184; the sequence is IAAVFAMQGFGILAGGMVAII. Residues 185 to 210 are Extracellular-facing; it reads VSAAFKNQFPAPAYKDGALASTISQA. A helical membrane pass occupies residues 211 to 231; the sequence is DFVWRIIVMFGAIPTALTYYW. Topologically, residues 232–290 are cytoplasmic; it reads RMKMPETARYTALVAKNLKQATNDMSKVLQVEIEPEQEKVEEISQGNDFGLFTKQFLRR. A helical membrane pass occupies residues 291–311; sequence HGLHLLGTASTWFLLDIAFYS. Residues 312-343 are Extracellular-facing; the sequence is QNLFQKDIFSAIGWIPPAETMNALEEVYRIAR. The helical transmembrane segment at 344–364 threads the bilayer; the sequence is AQTLIALCSTVPGYWFTVAFI. Over 365 to 369 the chain is Cytoplasmic; that stretch reads DKIGR. Residues 370 to 390 traverse the membrane as a helical segment; sequence FAIQLMGFFFMTVFMFALAIP. The Extracellular segment spans residues 391-400; the sequence is YTHWTHKDNR. Residues 401–421 traverse the membrane as a helical segment; it reads IGFVIMYSLTFFFANFGPNAT. Residues 422–440 are Cytoplasmic-facing; sequence TFVVPAEIFPARLRSTCHG. A helical membrane pass occupies residues 441–461; sequence ISAAAGKAGAMVGAFGFLYAA. Residues 462–481 are Extracellular-facing; sequence QSTDPKKTDAGYPAGIGVRN. The chain crosses the membrane as a helical span at residues 482 to 502; that stretch reads SLIVLGCVNFLGMLFTLLVPE. Over 503 to 534 the chain is Cytoplasmic; it reads SKGKSLEEMSRENEGEDENGTEMRASGRTVPV. The segment at 507–534 is disordered; the sequence is SLEEMSRENEGEDENGTEMRASGRTVPV.

The protein belongs to the major facilitator superfamily. Phosphate:H(+) symporter (TC 2.A.1.9) family.

It localises to the cell membrane. The catalysed reaction is phosphate(in) + H(+)(in) = phosphate(out) + H(+)(out). Low-affinity transporter for external inorganic phosphate (Pi). Involved in phosphorus (P) remobilization from dying to developing tissues during corolla senescence in an ethylene-dependent manner. This is Low affinity inorganic phosphate transporter 1 from Petunia hybrida (Petunia).